A 99-amino-acid chain; its full sequence is PqqA binding protein (99 aa).

This sequence belongs to the PqqD family. As to quaternary structure, monomer. Interacts with PqqE.

It functions in the pathway cofactor biosynthesis; pyrroloquinoline quinone biosynthesis. Its function is as follows. Functions as a PqqA binding protein and presents PqqA to PqqE, in the pyrroloquinoline quinone (PQQ) biosynthetic pathway. The protein is PqqA binding protein of Acinetobacter baylyi (strain ATCC 33305 / BD413 / ADP1).